A 245-amino-acid chain; its full sequence is 5-oxoprolinase subunit A (245 aa).

This sequence belongs to the LamB/PxpA family. In terms of assembly, forms a complex composed of PxpA, PxpB and PxpC.

The catalysed reaction is 5-oxo-L-proline + ATP + 2 H2O = L-glutamate + ADP + phosphate + H(+). Its function is as follows. Catalyzes the cleavage of 5-oxoproline to form L-glutamate coupled to the hydrolysis of ATP to ADP and inorganic phosphate. The sequence is that of 5-oxoprolinase subunit A from Erwinia tasmaniensis (strain DSM 17950 / CFBP 7177 / CIP 109463 / NCPPB 4357 / Et1/99).